A 159-amino-acid polypeptide reads, in one-letter code: Urease subunit beta 2 (159 aa).

Residues 1-23 form a disordered region; it reads MAKEPTEAAHPQPEQTKTNHKAH.

The protein belongs to the urease beta subunit family. As to quaternary structure, heterotrimer of UreA (gamma), UreB (beta) and UreC (alpha) subunits. Three heterotrimers associate to form the active enzyme.

It localises to the cytoplasm. The enzyme catalyses urea + 2 H2O + H(+) = hydrogencarbonate + 2 NH4(+). Its pathway is nitrogen metabolism; urea degradation; CO(2) and NH(3) from urea (urease route): step 1/1. This chain is Urease subunit beta 2, found in Brucella abortus biovar 1 (strain 9-941).